The sequence spans 430 residues: C4-dicarboxylate transport protein (430 aa).

Transmembrane regions (helical) follow at residues 9-29, 45-65, 79-99, 149-169, 185-205, 223-243, 308-328, and 356-376; these read VLYV…HFYP, LIKM…IAGM, LLYF…ATHL, GEIL…AHLG, VLFG…FGAM, LIGT…GAIA, IYMT…LTWM, and AATL…ILGI.

Belongs to the dicarboxylate/amino acid:cation symporter (DAACS) (TC 2.A.23) family.

It is found in the cell inner membrane. Functionally, responsible for the transport of dicarboxylates such as succinate, fumarate, and malate from the periplasm across the membrane. The chain is C4-dicarboxylate transport protein from Burkholderia orbicola (strain AU 1054).